A 571-amino-acid polypeptide reads, in one-letter code: Medium/long-chain-fatty-acid--CoA ligase FadD8 (571 aa).

The disordered stretch occupies residues 1–22 (MSTAGDDAVGVPPACGGRSDAV).

Belongs to the ATP-dependent AMP-binding enzyme family.

It carries out the reaction a medium-chain fatty acid + ATP + CoA = a medium-chain fatty acyl-CoA + AMP + diphosphate. The enzyme catalyses a long-chain fatty acid + ATP + CoA = a long-chain fatty acyl-CoA + AMP + diphosphate. The catalysed reaction is hexanoate + ATP + CoA = hexanoyl-CoA + AMP + diphosphate. It catalyses the reaction dodecanoate + ATP + CoA = dodecanoyl-CoA + AMP + diphosphate. It carries out the reaction hexadecanoate + ATP + CoA = hexadecanoyl-CoA + AMP + diphosphate. The protein operates within lipid metabolism; fatty acid metabolism. In terms of biological role, catalyzes the activation of medium/long-chain fatty acids as acyl-coenzyme A (acyl-CoA). This chain is Medium/long-chain-fatty-acid--CoA ligase FadD8, found in Mycobacterium tuberculosis (strain ATCC 25618 / H37Rv).